A 246-amino-acid polypeptide reads, in one-letter code: Adenosylcobinamide-GDP ribazoletransferase (246 aa).

A run of 6 helical transmembrane segments spans residues 37 to 57, 64 to 84, 100 to 122, 139 to 159, 185 to 205, and 223 to 243; these read FPAV…AGAL, ALAA…DGLA, LLAV…LQLL, ALVL…WWLM, LAAA…VLWW, and AGIE…GLWI.

This sequence belongs to the CobS family. Mg(2+) serves as cofactor.

It is found in the cell inner membrane. It catalyses the reaction alpha-ribazole + adenosylcob(III)inamide-GDP = adenosylcob(III)alamin + GMP + H(+). The catalysed reaction is alpha-ribazole 5'-phosphate + adenosylcob(III)inamide-GDP = adenosylcob(III)alamin 5'-phosphate + GMP + H(+). It participates in cofactor biosynthesis; adenosylcobalamin biosynthesis; adenosylcobalamin from cob(II)yrinate a,c-diamide: step 7/7. Joins adenosylcobinamide-GDP and alpha-ribazole to generate adenosylcobalamin (Ado-cobalamin). Also synthesizes adenosylcobalamin 5'-phosphate from adenosylcobinamide-GDP and alpha-ribazole 5'-phosphate. In Novosphingobium aromaticivorans (strain ATCC 700278 / DSM 12444 / CCUG 56034 / CIP 105152 / NBRC 16084 / F199), this protein is Adenosylcobinamide-GDP ribazoletransferase.